A 570-amino-acid chain; its full sequence is Glucan 1,3-beta-glucosidase 2 (570 aa).

Residues asparagine 91, asparagine 116, asparagine 121, asparagine 184, asparagine 203, and asparagine 248 are each glycosylated (N-linked (GlcNAc...) asparagine). The active-site Proton donor is the glutamate 338. Asparagine 364 is a glycosylation site (N-linked (GlcNAc...) asparagine). Residue glutamate 439 is the Nucleophile of the active site. 2 N-linked (GlcNAc...) asparagine glycosylation sites follow: asparagine 525 and asparagine 552.

It belongs to the glycosyl hydrolase 5 (cellulase A) family.

Its subcellular location is the secreted. It carries out the reaction Successive hydrolysis of beta-D-glucose units from the non-reducing ends of (1-&gt;3)-beta-D-glucans, releasing alpha-glucose.. This chain is Glucan 1,3-beta-glucosidase 2 (exg2), found in Schizosaccharomyces pombe (strain 972 / ATCC 24843) (Fission yeast).